We begin with the raw amino-acid sequence, 280 residues long: MEVRQGANARDVKGYDTERLRNDFLIQNLFPADDFKLVYSQIDRIIVGGCMPVNKELTLEAGSELKAAYFLERREMGIFNVGGNGSVIVDGTEYKFKYRDGLYIGMGSKEIKFKSEDSSKPAKFYFNSTPAHKTYPTVFIDPEKDIKDEFKLQLGSVEGCNKRLNRKYILPGQVETCQLEMGITTLEPGSVWNTMPCHTHDRRMEVYFYFEIPEEDIVVHYMGEPTETRHIIMRSEEAVISPSWSIHSASATHAYAFIWGMAGENQDFDDMDWVDMKDLK.

Positions 198, 200, 205, and 247 each coordinate Zn(2+).

The protein belongs to the KduI family. Requires Zn(2+) as cofactor.

It carries out the reaction 5-dehydro-4-deoxy-D-glucuronate = 3-deoxy-D-glycero-2,5-hexodiulosonate. It participates in glycan metabolism; pectin degradation; 2-dehydro-3-deoxy-D-gluconate from pectin: step 4/5. Functionally, catalyzes the isomerization of 5-dehydro-4-deoxy-D-glucuronate to 3-deoxy-D-glycero-2,5-hexodiulosonate. In Lachnospira eligens (strain ATCC 27750 / DSM 3376 / VPI C15-48 / C15-B4) (Eubacterium eligens), this protein is 4-deoxy-L-threo-5-hexosulose-uronate ketol-isomerase.